A 129-amino-acid polypeptide reads, in one-letter code: Trefoil factor 2 (129 aa).

The N-terminal stretch at 1–23 (MGPRGAPLLVVVLVLGLHALAEG) is a signal peptide. P-type domains are found at residues 29–73 (CRCS…FHPL) and 79–122 (EQCV…FFPQ). Intrachain disulfides connect Cys29–Cys127, Cys31–Cys58, Cys42–Cys57, Cys52–Cys69, Cys81–Cys107, Cys91–Cys106, and Cys101–Cys118.

In terms of tissue distribution, expressed in the digestive tract, where it was found predominantly in the stomach with highest expression in the antrum. It is secreted predominantly from antral mucous cells into the lumen of the gastrointestinal tract.

Its subcellular location is the secreted. Functionally, inhibits gastrointestinal motility and gastric acid secretion. Could function as a structural component of gastric mucus, possibly by stabilizing glycoproteins in the mucus gel through interactions with carbohydrate side chains. The sequence is that of Trefoil factor 2 (Tff2) from Rattus norvegicus (Rat).